A 288-amino-acid chain; its full sequence is Elongation factor Ts (288 aa).

Residues 80–83 are involved in Mg(2+) ion dislocation from EF-Tu; the sequence is TDFL.

The protein belongs to the EF-Ts family.

It localises to the cytoplasm. Functionally, associates with the EF-Tu.GDP complex and induces the exchange of GDP to GTP. It remains bound to the aminoacyl-tRNA.EF-Tu.GTP complex up to the GTP hydrolysis stage on the ribosome. This chain is Elongation factor Ts, found in Pseudomonas fluorescens (strain ATCC BAA-477 / NRRL B-23932 / Pf-5).